Here is a 434-residue protein sequence, read N- to C-terminus: Na(+)/H(+) antiporter NhaA 1 (434 aa).

11 consecutive transmembrane segments (helical) span residues 34 to 54 (GLLL…PWSA), 73 to 93 (LTLG…VAGL), 111 to 131 (ALPV…YVLW), 141 to 161 (GWAI…AVIS), 171 to 191 (FLLT…ALFY), 194 to 214 (ELHL…ALLV), 233 to 253 (VLVH…GFAV), 278 to 298 (SAGL…VGGF), 313 to 333 (VVTG…WLLA), 346 to 366 (WVDV…SLLI), and 380 to 400 (HVKV…TGVL).

This sequence belongs to the NhaA Na(+)/H(+) (TC 2.A.33) antiporter family.

It is found in the cell membrane. It carries out the reaction Na(+)(in) + 2 H(+)(out) = Na(+)(out) + 2 H(+)(in). Its function is as follows. Na(+)/H(+) antiporter that extrudes sodium in exchange for external protons. The chain is Na(+)/H(+) antiporter NhaA 1 from Nocardioides sp. (strain ATCC BAA-499 / JS614).